A 901-amino-acid polypeptide reads, in one-letter code: HTH-type transcriptional regulator MalT (901 aa).

39–46 (SPAGYGKT) lines the ATP pocket. An HTH luxR-type domain is found at 829–894 (ELIRTSPLTQ…AAVQHAQKLL (66 aa)). Positions 853 to 872 (NEQIAGELEVAATTIKTHIR) form a DNA-binding region, H-T-H motif.

It belongs to the MalT family. Monomer in solution. Oligomerizes to an active state in the presence of the positive effectors ATP and maltotriose.

With respect to regulation, activated by ATP and maltotriose, which are both required for DNA binding. In terms of biological role, positively regulates the transcription of the maltose regulon whose gene products are responsible for uptake and catabolism of malto-oligosaccharides. Specifically binds to the promoter region of its target genes, recognizing a short DNA motif called the MalT box. This Escherichia coli O6:H1 (strain CFT073 / ATCC 700928 / UPEC) protein is HTH-type transcriptional regulator MalT.